The following is a 147-amino-acid chain: Nucleoside diphosphate kinase (147 aa).

ATP contacts are provided by K9, F57, R85, T91, R102, and N112. Residue H115 is the Pros-phosphohistidine intermediate of the active site.

It belongs to the NDK family. In terms of assembly, homotetramer. It depends on Mg(2+) as a cofactor.

Its subcellular location is the cytoplasm. It carries out the reaction a 2'-deoxyribonucleoside 5'-diphosphate + ATP = a 2'-deoxyribonucleoside 5'-triphosphate + ADP. It catalyses the reaction a ribonucleoside 5'-diphosphate + ATP = a ribonucleoside 5'-triphosphate + ADP. Major role in the synthesis of nucleoside triphosphates other than ATP. The ATP gamma phosphate is transferred to the NDP beta phosphate via a ping-pong mechanism, using a phosphorylated active-site intermediate. This is Nucleoside diphosphate kinase from Listeria monocytogenes serotype 4b (strain F2365).